Consider the following 359-residue polypeptide: Chaperone protein DnaJ (359 aa).

One can recognise a J domain in the interval 3-68 (DYYEILGVPK…ERRQTYDRYG (66 aa)). The CR-type zinc finger occupies 128 to 205 (GVSKDIKYKI…CAGKGFIEEQ (78 aa)). Zn(2+) contacts are provided by C141, C144, C157, C160, C179, C182, C193, and C196. CXXCXGXG motif repeat units follow at residues 141 to 148 (CKTCDGTG), 157 to 164 (CPYCGGSG), 179 to 186 (CPFCKGSG), and 193 to 200 (CHDCAGKG).

It belongs to the DnaJ family. As to quaternary structure, homodimer. The cofactor is Zn(2+).

Its subcellular location is the cytoplasm. In terms of biological role, participates actively in the response to hyperosmotic and heat shock by preventing the aggregation of stress-denatured proteins and by disaggregating proteins, also in an autonomous, DnaK-independent fashion. Unfolded proteins bind initially to DnaJ; upon interaction with the DnaJ-bound protein, DnaK hydrolyzes its bound ATP, resulting in the formation of a stable complex. GrpE releases ADP from DnaK; ATP binding to DnaK triggers the release of the substrate protein, thus completing the reaction cycle. Several rounds of ATP-dependent interactions between DnaJ, DnaK and GrpE are required for fully efficient folding. Also involved, together with DnaK and GrpE, in the DNA replication of plasmids through activation of initiation proteins. This is Chaperone protein DnaJ from Campylobacter hominis (strain ATCC BAA-381 / DSM 21671 / CCUG 45161 / LMG 19568 / NCTC 13146 / CH001A).